The sequence spans 305 residues: UDP-3-O-acyl-N-acetylglucosamine deacetylase (305 aa).

Zn(2+) contacts are provided by His-79, His-238, and Asp-242. His-265 functions as the Proton donor in the catalytic mechanism.

It belongs to the LpxC family. Zn(2+) serves as cofactor.

It catalyses the reaction a UDP-3-O-[(3R)-3-hydroxyacyl]-N-acetyl-alpha-D-glucosamine + H2O = a UDP-3-O-[(3R)-3-hydroxyacyl]-alpha-D-glucosamine + acetate. It functions in the pathway glycolipid biosynthesis; lipid IV(A) biosynthesis; lipid IV(A) from (3R)-3-hydroxytetradecanoyl-[acyl-carrier-protein] and UDP-N-acetyl-alpha-D-glucosamine: step 2/6. Its function is as follows. Catalyzes the hydrolysis of UDP-3-O-myristoyl-N-acetylglucosamine to form UDP-3-O-myristoylglucosamine and acetate, the committed step in lipid A biosynthesis. This chain is UDP-3-O-acyl-N-acetylglucosamine deacetylase, found in Klebsiella pneumoniae subsp. pneumoniae (strain ATCC 700721 / MGH 78578).